The primary structure comprises 506 residues: EPTC-inducible aldehyde dehydrogenase (506 aa).

Glycine 219–glycine 225 contacts NAD(+). Active-site residues include glutamate 263 and cysteine 302.

The protein belongs to the aldehyde dehydrogenase family.

The catalysed reaction is an aldehyde + NAD(+) + H2O = a carboxylate + NADH + 2 H(+). Functionally, degrades all aldehydes potentially generated by N dealkylation of thiocarbamates and may also participate in ethanolamine metabolism and further assimilation of degradation products by thiocarbamate-induced cytochrome P-450. This chain is EPTC-inducible aldehyde dehydrogenase (thcA), found in Rhodococcus erythropolis (Arthrobacter picolinophilus).